Consider the following 487-residue polypeptide: GTPase Der (487 aa).

2 consecutive EngA-type G domains span residues 3–166 (PVIA…PRDA) and 193–366 (IKIA…KSAV). GTP is bound by residues 9–16 (GRPNVGKS), 56–60 (DTGGI), 118–121 (NKID), 199–206 (GRPNVGKS), 246–250 (DTAGV), and 311–314 (NKWD). The region spanning 367–451 (TRWPTSRLTQ…PIRIEYKGGE (85 aa)) is the KH-like domain. Over residues 448-461 (KGGENPYEGKKNTL) the composition is skewed to basic and acidic residues. Positions 448–487 (KGGENPYEGKKNTLTDRQVNKKRRLMSHHKKAEKKRRDKR) are disordered. Residues 467–487 (NKKRRLMSHHKKAEKKRRDKR) are compositionally biased toward basic residues.

The protein belongs to the TRAFAC class TrmE-Era-EngA-EngB-Septin-like GTPase superfamily. EngA (Der) GTPase family. Associates with the 50S ribosomal subunit.

Its function is as follows. GTPase that plays an essential role in the late steps of ribosome biogenesis. This is GTPase Der from Pseudomonas putida (strain W619).